A 279-amino-acid chain; its full sequence is Zinc finger CCCH domain-containing protein 1 (279 aa).

The segment at 20 to 45 (DVIVLSPGPPARRRPPPVKAVEPESG) is disordered. C3H1-type zinc fingers lie at residues 56-84 (FYKTRVCETFVTSGRCMFEDGCTFAHGDE) and 139-167 (RAITKVCFEFRDKGICYFGETCAFPHVSA).

This is Zinc finger CCCH domain-containing protein 1 from Oryza sativa subsp. japonica (Rice).